The sequence spans 192 residues: Cytidylate kinase (192 aa).

7-15 contributes to the ATP binding site; the sequence is GPAGSGKST.

The protein belongs to the cytidylate kinase family. Type 2 subfamily.

The protein resides in the cytoplasm. It carries out the reaction CMP + ATP = CDP + ADP. The catalysed reaction is dCMP + ATP = dCDP + ADP. The chain is Cytidylate kinase from Haloarcula marismortui (strain ATCC 43049 / DSM 3752 / JCM 8966 / VKM B-1809) (Halobacterium marismortui).